The primary structure comprises 233 residues: Hydroxyacylglutathione hydrolase (233 aa).

The Zn(2+) site is built by His52, His54, Asp56, His57, His108, Asp125, and His163.

Belongs to the metallo-beta-lactamase superfamily. Glyoxalase II family. In terms of assembly, monomer. Requires Zn(2+) as cofactor.

It catalyses the reaction an S-(2-hydroxyacyl)glutathione + H2O = a 2-hydroxy carboxylate + glutathione + H(+). Its pathway is secondary metabolite metabolism; methylglyoxal degradation; (R)-lactate from methylglyoxal: step 2/2. Its function is as follows. Thiolesterase that catalyzes the hydrolysis of S-D-lactoyl-glutathione to form glutathione and D-lactic acid. This is Hydroxyacylglutathione hydrolase from Histophilus somni (strain 2336) (Haemophilus somnus).